A 268-amino-acid polypeptide reads, in one-letter code: MEFAHLTVLSLFCLAFVGITATSSGEDYWQSIWPNTPLPKTFSDLSIPSGKTNSLPIKSEELKQYSTLFFEHDLHPRKNFILGNTNSVGSIIRPFTKSRQGVTDSIWLANKEKQSLEDFCYSPTAIAEHKHCVSSLKSMIDQVISHFGSTKIKAISSNFAPYQDQYVVEDVKKVGDNAVMCHRLNFEKVVFNCHQVRDTTAYVVSLVASDGTKTKALTVCHHDTRGMNPELLYEALEVTLGTVPVCHFIGNKAAAWVPNHTADNLCVM.

Positions Met-1–Thr-22 are cleaved as a signal peptide. Positions Leu-68–Asn-259 constitute a BURP domain.

The sequence is that of Unknown seed protein 30.1 from Vicia faba (Broad bean).